The chain runs to 389 residues: MIRNVVVGVSGGVDSAVSAHLLAEQGFKVLGVFMRNWDEADEVGRCSGEADLKDAEWACRQLGVELRQVNYVREYWTAVFSQFLDDYQMGLTPNPDILCNRHIKFDLFHKHALENLGYDAVATGHYARNSLGNYLEGIASNNDARLLIPADTFKDQTFFLAGISRKALQRTMFPLGDFQKSQVKDLAKKIGFQRLAKKKESTGICFVGKRNFKDFIQEYITSKRGPFLDIDSGAVVGHHEGIHQWTVGQRCRLSSFLQPYFVARKEAASNTIYVASGHNHPALLSTHIAVDPPNWLCSKSQQILSDTGSLRCRFRFQHTKPLVDCQLSISPSNTFLVELDAPLRAITPGQYAVFYDDTACLGSARILSANPLKKKNAQTQQAQAANLVS.

ATP is bound by residues 8–15 (GVSGGVDS) and M34. The interaction with target base in tRNA stretch occupies residues 94 to 96 (NPD). C99 serves as the catalytic Nucleophile. C99 and C205 are oxidised to a cystine. G124 contacts ATP. Residues 154 to 156 (KDQ) are interaction with tRNA. C205 serves as the catalytic Cysteine persulfide intermediate. Residues 317 to 318 (QH) are interaction with tRNA.

It belongs to the MnmA/TRMU family.

The protein localises to the mitochondrion. It carries out the reaction 5-taurinomethyluridine(34) in tRNA + S-sulfanyl-L-cysteinyl-[protein] + AH2 + ATP = 5-taurinomethyl-2-thiouridine(34) in tRNA + L-cysteinyl-[protein] + A + AMP + diphosphate + H(+). Catalyzes the 2-thiolation of uridine at the wobble position (U34) of mitochondrial tRNA(Lys), tRNA(Glu) and tRNA(Gln). Required for the formation of 5-taurinomethyl-2-thiouridine (tm5s2U) of mitochondrial tRNA(Lys), tRNA(Glu), and tRNA(Gln) at the wobble position. ATP is required to activate the C2 atom of the wobble base. The sequence is that of Mitochondrial tRNA-specific 2-thiouridylase 1 from Drosophila melanogaster (Fruit fly).